Reading from the N-terminus, the 205-residue chain is Cerebellin-3 (205 aa).

Residues 1–32 (MLGTKRHWPPGPSLSLELPLALTLLALRAGWA) form the signal peptide. The C1q domain occupies 67–205 (APPGRVAFAA…SFSGFLIFPL (139 aa)). N-linked (GlcNAc...) asparagine glycosylation occurs at asparagine 90.

As to quaternary structure, heterohexamer; disulfide-linked heterotrimers. Interacts with CBLN1. May also form oligomers with CBLN2 and CBLN4.

The protein localises to the endoplasmic reticulum. It is found in the golgi apparatus. Its subcellular location is the cis-Golgi network. The protein resides in the secreted. It localises to the synapse. Its function is as follows. May be involved in synaptic functions in the CNS. The protein is Cerebellin-3 (CBLN3) of Bos taurus (Bovine).